We begin with the raw amino-acid sequence, 412 residues long: 43 kDa receptor-associated protein of the synapse (412 aa).

Gly-2 carries the N-myristoyl glycine lipid modification. TPR repeat units follow at residues 6–39, 83–116, 123–156, 163–196, 206–239, 246–279, and 286–319; these read TKQQ…STEL, TEAY…EGGP, GQVC…AHGN, CRVC…VADY, AMSR…ALQH, ALCL…MTEI, and AHVL…ADAV. Tyr-196 is modified (phosphotyrosine). An RING-type zinc finger spans residues 363–403; sequence CGLCGESIGDQNSQLQALPCSHLFHLKCLQTNGNRGCPNCK. A Phosphoserine modification is found at Ser-405.

Belongs to the RAPsyn family.

The protein localises to the cell membrane. It localises to the postsynaptic cell membrane. It is found in the cytoplasm. The protein resides in the cytoskeleton. In terms of biological role, postsynaptic protein required for clustering of nicotinic acetylcholine receptors (nAChRs) at the neuromuscular junction. It may link the receptor to the underlying postsynaptic cytoskeleton, possibly by direct association with actin or spectrin. The sequence is that of 43 kDa receptor-associated protein of the synapse (RAPSN) from Tetronarce californica (Pacific electric ray).